The chain runs to 70 residues: Putative membrane protein insertion efficiency factor (70 aa).

Belongs to the UPF0161 family.

It localises to the cell inner membrane. Functionally, could be involved in insertion of integral membrane proteins into the membrane. The polypeptide is Putative membrane protein insertion efficiency factor (Sphingopyxis alaskensis (strain DSM 13593 / LMG 18877 / RB2256) (Sphingomonas alaskensis)).